The sequence spans 205 residues: Glycerol-3-phosphate acyltransferase (205 aa).

Topologically, residues 1 to 3 (MSA) are periplasmic. Residues 4–24 (IAPGMILFAYLCGSISSAILV) form a helical membrane-spanning segment. At 25–52 (CRIAGLPDPRESGSGNPGATNVLRIGGK) the chain is on the cytoplasmic side. The chain crosses the membrane as a helical span at residues 53–73 (GAAVAVLIFDILKGMLPVWGA). Residues 74–80 (YALGITP) are Periplasmic-facing. A helical membrane pass occupies residues 81 to 101 (FWLGLIAIAACLGHIWPVFFG). Over 102–111 (FKGGKGVATA) the chain is Cytoplasmic. A helical membrane pass occupies residues 112–132 (FGAIAPIGWDLTGVIAGTWLL). Residues 133-137 (TVLLS) are Periplasmic-facing. Residues 138-158 (GYSSLGAIVSALIAPFYVWWF) form a helical membrane-spanning segment. Topologically, residues 159–205 (KPQFTFPVSMLSCLILLRHHDNIQRLWRRQETKIWTKLKKKREKESK) are cytoplasmic.

This sequence belongs to the PlsY family. Probably interacts with PlsX.

It is found in the cell inner membrane. The enzyme catalyses sn-glycerol 3-phosphate + an acyl-CoA = a 1-acyl-sn-glycero-3-phosphate + CoA. It catalyses the reaction a fatty acyl-[ACP] + sn-glycerol 3-phosphate = a 1-acyl-sn-glycero-3-phosphate + holo-[ACP]. It functions in the pathway lipid metabolism; phospholipid metabolism. In terms of biological role, catalyzes the transfer of an acyl group from acyl-ACP to glycerol-3-phosphate (G3P) to form lysophosphatidic acid (LPA). This enzyme can also utilize acyl-CoA as fatty acyl donor, but not acyl-PO(4). This chain is Glycerol-3-phosphate acyltransferase, found in Salmonella arizonae (strain ATCC BAA-731 / CDC346-86 / RSK2980).